The primary structure comprises 689 residues: MSISALGGRTKGKPLPPGEEERNNVLKQMKVRTTLKGDKSWITKQDESEGRTIELPSGRSRATSFSSAGEVPKPRPPSTRAPTGYIIRGVFTKPIDSSSQPQQQFPKANGTPKSAASLVRTANAGPPRPSSSGYKMTTEDYKKLAPYNIRRSSTSGDTEEEEEEEVVPFSSDEQKRRSEAASGVLRRTAPREHSYVLSAAKKSTGPTQETQAPFIAKRVEVVEEDGPSEKSQDPPALARSTPGSNSADGGRTKASRAIWIECLPSMPSPAGSQELSSRGEEIVRLQILTPRAGLRLVAPDVEGMRSSPGNKDKEAPCSRELQRDLAGEEAFRAPNTDAARSSAQLSDGNVGSGATGSRPEGLAAVDIGSERGSSSATSVSAVPADRKSNSTAAQEDAKADPKGALADYEGKDVATRVGEAWQERPGAPRGGQGDPAVPAQQPADPSTPERQSSPSGSEQLVRRESCGSSVLTDFEGKDVATKVGEAWQDRPGAPRGGQGDPAVPTQQPADPSTPEQQNSPSGSEQFVRRESCTSRVRSPSSCMVTVTVTATSEQPHIYIPAPASELDSSSTTKGILFVKEYVNASEVSSGKPVSARYSNVSSIEDSFAMEKKPPCGSTPYSERTTGGICTYCNREIRDCPKITLEHLGICCHEYCFKCGICSKPMGDLLDQIFIHRDTIHCGKCYEKLF.

Disordered regions lie at residues 1 to 253 and 298 to 534; these read MSIS…GRTK and APDV…SCTS. Basic and acidic residues predominate over residues 35–52; that stretch reads LKGDKSWITKQDESEGRT. Ser66 carries the phosphoserine modification. The span at 95 to 114 shows a compositional bias: polar residues; sequence IDSSSQPQQQFPKANGTPKS. The residue at position 153 (Ser153) is a Phosphoserine. Residues 157-166 show a composition bias toward acidic residues; it reads DTEEEEEEEV. Pro206 carries the phosphoserine modification. Composition is skewed to basic and acidic residues over residues 217-232 and 310-331; these read KRVEVVEEDGPSEKSQ and NKDKEAPCSRELQRDLAGEEAF. Residues 338–349 are compositionally biased toward polar residues; it reads AARSSAQLSDGN. Low complexity-rich tracts occupy residues 373-382 and 434-444; these read SSSATSVSAV and DPAVPAQQPAD. A Phosphothreonine modification is found at Thr447. Positions 448-458 are enriched in polar residues; that stretch reads PERQSSPSGSE. Ser453 and Ser465 each carry phosphoserine. Residues 504-524 are compositionally biased toward polar residues; that stretch reads PTQQPADPSTPEQQNSPSGSE. Residues 627–689 enclose the LIM zinc-binding domain; that stretch reads GICTYCNREI…HCGKCYEKLF (63 aa).

Expressed in placenta, pancreas and kidney. Also expressed in prostate, testis, ovary and blood.

The protein localises to the cytoplasm. It is found in the cytoskeleton. The protein resides in the cell junction. It localises to the focal adhesion. In terms of biological role, may be involved in the regulation of cellular proliferation and/or differentiation. The chain is Zinc finger protein 185 (ZNF185) from Homo sapiens (Human).